The primary structure comprises 349 residues: Methylthioribose-1-phosphate isomerase (349 aa).

Substrate-binding positions include 49–51 (RGA), Arg-92, and Gln-199. The active-site Proton donor is the Asp-240. 250–251 (NK) serves as a coordination point for substrate.

It belongs to the eIF-2B alpha/beta/delta subunits family. MtnA subfamily.

The enzyme catalyses 5-(methylsulfanyl)-alpha-D-ribose 1-phosphate = 5-(methylsulfanyl)-D-ribulose 1-phosphate. Its pathway is amino-acid biosynthesis; L-methionine biosynthesis via salvage pathway; L-methionine from S-methyl-5-thio-alpha-D-ribose 1-phosphate: step 1/6. Its function is as follows. Catalyzes the interconversion of methylthioribose-1-phosphate (MTR-1-P) into methylthioribulose-1-phosphate (MTRu-1-P). In Syntrophobacter fumaroxidans (strain DSM 10017 / MPOB), this protein is Methylthioribose-1-phosphate isomerase.